Here is a 365-residue protein sequence, read N- to C-terminus: Histidinol-phosphate aminotransferase (365 aa).

Residues M1 to P22 are disordered. An N6-(pyridoxal phosphate)lysine modification is found at K221.

This sequence belongs to the class-II pyridoxal-phosphate-dependent aminotransferase family. Histidinol-phosphate aminotransferase subfamily. In terms of assembly, homodimer. It depends on pyridoxal 5'-phosphate as a cofactor.

The catalysed reaction is L-histidinol phosphate + 2-oxoglutarate = 3-(imidazol-4-yl)-2-oxopropyl phosphate + L-glutamate. It participates in amino-acid biosynthesis; L-histidine biosynthesis; L-histidine from 5-phospho-alpha-D-ribose 1-diphosphate: step 7/9. The chain is Histidinol-phosphate aminotransferase from Nitrobacter winogradskyi (strain ATCC 25391 / DSM 10237 / CIP 104748 / NCIMB 11846 / Nb-255).